The chain runs to 288 residues: Phytanoyl-CoA dioxygenase domain-containing protein 1 homolog (288 aa).

2-oxoglutarate is bound by residues Lys95, Met134, 149-151, and Trp167; that span reads HVD. Positions 149 and 151 each coordinate Fe cation. His242 serves as a coordination point for Fe cation. Residues Ser244 and Arg253 each contribute to the 2-oxoglutarate site.

It belongs to the PhyH family. PHYHD1 subfamily. Fe cation serves as cofactor.

Functionally, has alpha-ketoglutarate-dependent dioxygenase activity. Does not show detectable activity towards fatty acid CoA thioesters. Is not expected to be active with phytanoyl CoA. The sequence is that of Phytanoyl-CoA dioxygenase domain-containing protein 1 homolog from Caenorhabditis briggsae.